We begin with the raw amino-acid sequence, 413 residues long: MDFLRKLPLGLTIHLSLFLLSLLYALNAGRLPELKDYIIYFKVRLEGQWELSEDGVSAPVFVEESEIEFLKGRKAFLFVKKARYIPKGSRFELFGNVRVKKNRVFISAYIWDLERLPEKKNIRDFLMEKFKEKVKDEHLRAIGLAFLFGESKRNLPAEVERVFLHTGLIHVLVVSGLHVGLVFLILSRLLPRFYGEVLGLVGVLFYSAFLVPHNPPVIRATSMLFLWVLSFLSFRRYCSLCVLFFTGTLMLFFFPHFSYSYSFWLSFFAVLYILLVLKDFEGGNTSKALMVSLGAFTGTAPLIASFSFVTPLSVLLTPVLSPLIFAYALFGVLSLLTLFSFPPSLILMNLSGELIFRVLEFFSDFSPKILSNVKPEEAFILLILGAIGLYVTKGYSKLLPLGVVNLYLIFKIN.

A run of 7 helical transmembrane segments spans residues G10–P32, V162–L184, L189–V211, L232–F254, Y259–V276, A288–T310, and F325–L347.

Its subcellular location is the cell membrane. This is an uncharacterized protein from Aquifex aeolicus (strain VF5).